A 241-amino-acid polypeptide reads, in one-letter code: MIIIPAIDLFDNCAVRLFKGNYKEKKIYSSEPWKLAEGFAKNGATLLHLVDLNGARNQLGINEDSILKIRKTTSLKVQLGGGIRDKEKLAYYDKIGIDRFILGTAAVTDPDLLKFALDNYEKERVVVAVDAIDGIVKIAGWEKDSGVRYRDLMDRLAKAGIEHIVFTDIAQDGTLAGPNLKAYQEILNSYPFQVIASGGISSLKDLMDLSSLKTKIPLYGVITGKALYEGKLDLAKAISSI.

Catalysis depends on aspartate 8, which acts as the Proton acceptor. Catalysis depends on aspartate 130, which acts as the Proton donor.

This sequence belongs to the HisA/HisF family.

The protein localises to the cytoplasm. The catalysed reaction is 1-(5-phospho-beta-D-ribosyl)-5-[(5-phospho-beta-D-ribosylamino)methylideneamino]imidazole-4-carboxamide = 5-[(5-phospho-1-deoxy-D-ribulos-1-ylimino)methylamino]-1-(5-phospho-beta-D-ribosyl)imidazole-4-carboxamide. Its pathway is amino-acid biosynthesis; L-histidine biosynthesis; L-histidine from 5-phospho-alpha-D-ribose 1-diphosphate: step 4/9. The chain is 1-(5-phosphoribosyl)-5-[(5-phosphoribosylamino)methylideneamino] imidazole-4-carboxamide isomerase from Leptospira borgpetersenii serovar Hardjo-bovis (strain L550).